A 101-amino-acid polypeptide reads, in one-letter code: DNA-binding protein Fis (101 aa).

The segment at residues glutamine 77–lysine 96 is a DNA-binding region (H-T-H motif).

This sequence belongs to the transcriptional regulatory Fis family. Homodimer.

Activates ribosomal RNA transcription. Plays a direct role in upstream activation of rRNA promoters. This is DNA-binding protein Fis from Shewanella denitrificans (strain OS217 / ATCC BAA-1090 / DSM 15013).